Here is an 85-residue protein sequence, read N- to C-terminus: Large ribosomal subunit protein bL27 (85 aa).

The tract at residues 1-20 (MATKKAGGSTRNGRDSEAKR) is disordered.

The protein belongs to the bacterial ribosomal protein bL27 family.

The protein is Large ribosomal subunit protein bL27 of Glaesserella parasuis serovar 5 (strain SH0165) (Haemophilus parasuis).